Reading from the N-terminus, the 719-residue chain is uncharacterized protein (719 aa).

Residues 64–100 (IQNLNQRKEEVIRLIAEQDKLTDNLKRKIEQSVKLQE) adopt a coiled-coil conformation. Positions 649–718 (GMELQGTVRN…QKGRVSLSMV (70 aa)) constitute an S1 motif domain.

This is an uncharacterized protein from Bacillus subtilis (strain 168).